Consider the following 140-residue polypeptide: CBS domain-containing protein YhcV (140 aa).

2 consecutive CBS domains span residues 8–64 (MTTQ…GRDG) and 72–127 (MSTE…NESA).

The chain is CBS domain-containing protein YhcV (yhcV) from Bacillus subtilis (strain 168).